The sequence spans 155 residues: Large ribosomal subunit protein uL22c (155 aa).

The protein belongs to the universal ribosomal protein uL22 family. In terms of assembly, part of the 50S ribosomal subunit.

It localises to the plastid. Its subcellular location is the chloroplast. Its function is as follows. This protein binds specifically to 23S rRNA. In terms of biological role, the globular domain of the protein is located near the polypeptide exit tunnel on the outside of the subunit, while an extended beta-hairpin is found that lines the wall of the exit tunnel in the center of the 70S ribosome. This Solanum tuberosum (Potato) protein is Large ribosomal subunit protein uL22c (rpl22).